A 118-amino-acid polypeptide reads, in one-letter code: DNA-directed RNA polymerase subunit omega (118 aa).

A disordered region spans residues 78 to 104 (DEPEEDSMAMLMGGGQPDKPAEDDMSE).

It belongs to the RNA polymerase subunit omega family. In terms of assembly, the RNAP catalytic core consists of 2 alpha, 1 beta, 1 beta' and 1 omega subunit. When a sigma factor is associated with the core the holoenzyme is formed, which can initiate transcription.

The enzyme catalyses RNA(n) + a ribonucleoside 5'-triphosphate = RNA(n+1) + diphosphate. Its function is as follows. Promotes RNA polymerase assembly. Latches the N- and C-terminal regions of the beta' subunit thereby facilitating its interaction with the beta and alpha subunits. The protein is DNA-directed RNA polymerase subunit omega of Dinoroseobacter shibae (strain DSM 16493 / NCIMB 14021 / DFL 12).